An 84-amino-acid chain; its full sequence is Small ribosomal subunit protein uS17 (84 aa).

This sequence belongs to the universal ribosomal protein uS17 family. Part of the 30S ribosomal subunit.

One of the primary rRNA binding proteins, it binds specifically to the 5'-end of 16S ribosomal RNA. This Erwinia tasmaniensis (strain DSM 17950 / CFBP 7177 / CIP 109463 / NCPPB 4357 / Et1/99) protein is Small ribosomal subunit protein uS17.